Reading from the N-terminus, the 492-residue chain is Coagulation factor X (492 aa).

Residues 1 to 23 form the signal peptide; it reads MAGLLHLVLLSTALGGLLRPAGS. Residues 24 to 40 constitute a propeptide that is removed on maturation; that stretch reads VFLPRDQAHRVLQRARR. One can recognise a Gla domain in the interval 41 to 85; the sequence is ANSFLEEVKQGNLERECLEEACSLEEAREVFEDAEQTDEFWSKYK. A 4-carboxyglutamate mark is found at Glu46, Glu47, Glu54, Glu56, Glu59, Glu60, Glu65, Glu66, Glu69, Glu72, Glu75, and Glu79. Residues Cys57 and Cys62 are joined by a disulfide bond. An EGF-like 1; calcium-binding domain is found at 86 to 122; it reads DGDQCEGHPCLNQGHCKDGIGDYTCTCAEGFEGKNCE. Intrachain disulfides connect Cys90-Cys101, Cys95-Cys110, Cys112-Cys121, Cys129-Cys140, Cys136-Cys149, Cys151-Cys164, Cys172-Cys341, Cys240-Cys245, Cys260-Cys276, Cys389-Cys403, and Cys414-Cys442. Asp103 carries the post-translational modification (3R)-3-hydroxyaspartate. One can recognise an EGF-like 2 domain in the interval 125–165; that stretch reads TREICSLDNGGCDQFCREERSEVRCSCAHGYVLGDDSKSCV. Residues 183–233 constitute a propeptide, activation peptide; it reads WAIHTSEDALDASELEHYDPADLSPTESSLDLLGLNRTEPSAGEDGSQVVR. Tyr200 bears the Sulfotyrosine mark. A glycan (O-linked (GalNAc...) threonine) is linked at Thr208. Asn218 carries an N-linked (GlcNAc...) asparagine glycan. One can recognise a Peptidase S1 domain in the interval 234 to 466; the sequence is IVGGRDCAEG…FLKWIDKIMK (233 aa). Residues His275 and Asp321 each act as charge relay system in the active site. Residue Ser418 is the Charge relay system of the active site. The tract at residues 472–492 is disordered; it reads AGSRGHSEAPATWTVPPPLPL. A propeptide spans 476–492 (may be removed but is not necessary for activation); that stretch reads GHSEAPATWTVPPPLPL. Residue Thr485 is glycosylated (O-linked (GalNAc...) threonine).

This sequence belongs to the peptidase S1 family. As to quaternary structure, the two chains are formed from a single-chain precursor by the excision of two Arg residues and are held together by 1 or more disulfide bonds. Forms a heterodimer with SERPINA5. Interacts (activated) with guianensin, an anticoagulant protein from Simulium guianense saliva. Interacts (activated) with simukunin, an anticoagulant protein from Simulium vittatum saliva. The vitamin K-dependent, enzymatic carboxylation of some glutamate residues allows the modified protein to bind calcium. Post-translationally, N- and O-glycosylated. In terms of processing, proteolytically cleaved and activated by cathepsin CTSG. The activation peptide is cleaved by factor IXa (in the intrinsic pathway), or by factor VIIa (in the extrinsic pathway). The iron and 2-oxoglutarate dependent 3-hydroxylation of aspartate and asparagine is (R) stereospecific within EGF domains.

It localises to the secreted. The enzyme catalyses Selective cleavage of Arg-|-Thr and then Arg-|-Ile bonds in prothrombin to form thrombin.. Its activity is regulated as follows. Inhibited by SERPINA5. In terms of biological role, factor Xa is a vitamin K-dependent glycoprotein that converts prothrombin to thrombin in the presence of factor Va, calcium and phospholipid during blood clotting. Factor Xa activates pro-inflammatory and pro-fibrotic signaling pathways in a protease-activated receptor (PAR)-dependent manner. The sequence is that of Coagulation factor X (F10) from Bos taurus (Bovine).